Reading from the N-terminus, the 490-residue chain is 23S rRNA (uracil(1939)-C(5))-methyltransferase RlmD (490 aa).

The TRAM domain maps to 14-75 (APAPAEYPID…SSFEKATLTA (62 aa)). Positions 88, 98, 101, and 180 each coordinate [4Fe-4S] cluster. S-adenosyl-L-methionine contacts are provided by Q289, F318, N323, E339, N374, and D395. The Nucleophile role is filled by C446.

The protein belongs to the class I-like SAM-binding methyltransferase superfamily. RNA M5U methyltransferase family. RlmD subfamily.

The catalysed reaction is uridine(1939) in 23S rRNA + S-adenosyl-L-methionine = 5-methyluridine(1939) in 23S rRNA + S-adenosyl-L-homocysteine + H(+). Its function is as follows. Catalyzes the formation of 5-methyl-uridine at position 1939 (m5U1939) in 23S rRNA. The chain is 23S rRNA (uracil(1939)-C(5))-methyltransferase RlmD from Polaromonas naphthalenivorans (strain CJ2).